We begin with the raw amino-acid sequence, 512 residues long: Histidine ammonia-lyase (512 aa).

The segment at residues 143–145 (CSG) is a cross-link (5-imidazolinone (Cys-Gly)). Serine 144 carries the 2,3-didehydroalanine (Ser) modification.

This sequence belongs to the PAL/histidase family. In terms of processing, contains an active site 4-methylidene-imidazol-5-one (MIO), which is formed autocatalytically by cyclization and dehydration of residues Cys-Ser-Gly.

It localises to the cytoplasm. It carries out the reaction L-histidine = trans-urocanate + NH4(+). It participates in amino-acid degradation; L-histidine degradation into L-glutamate; N-formimidoyl-L-glutamate from L-histidine: step 1/3. The chain is Histidine ammonia-lyase from Streptomyces coelicolor (strain ATCC BAA-471 / A3(2) / M145).